We begin with the raw amino-acid sequence, 144 residues long: Neuritin-B (144 aa).

The N-terminal stretch at 1–27 (MGLKLSGRYIFLVLAVHLAYLLQAVKA) is a signal peptide. The GPI-anchor amidated serine moiety is linked to residue S114. Residues 115–144 (TGAPGPRLLFPAFLPLLIVFLSALLNWVLQ) constitute a propeptide, removed in mature form.

The protein belongs to the neuritin family.

Its subcellular location is the cell membrane. Modulates postsynaptic dendritic arbor elaboration and synaptic maturation. The chain is Neuritin-B (nrn1-b) from Xenopus laevis (African clawed frog).